We begin with the raw amino-acid sequence, 389 residues long: Succinate--CoA ligase [ADP-forming] subunit beta (389 aa).

The 236-residue stretch at Lys9–Ile244 folds into the ATP-grasp domain. ATP is bound by residues Lys46, Gly53–Gly55, Gly102, and Glu107. Mg(2+) contacts are provided by Asn199 and Asp213. Substrate is bound by residues Asn264 and Gly321 to Val323.

This sequence belongs to the succinate/malate CoA ligase beta subunit family. Heterotetramer of two alpha and two beta subunits. The cofactor is Mg(2+).

The catalysed reaction is succinate + ATP + CoA = succinyl-CoA + ADP + phosphate. It carries out the reaction GTP + succinate + CoA = succinyl-CoA + GDP + phosphate. It functions in the pathway carbohydrate metabolism; tricarboxylic acid cycle; succinate from succinyl-CoA (ligase route): step 1/1. In terms of biological role, succinyl-CoA synthetase functions in the citric acid cycle (TCA), coupling the hydrolysis of succinyl-CoA to the synthesis of either ATP or GTP and thus represents the only step of substrate-level phosphorylation in the TCA. The beta subunit provides nucleotide specificity of the enzyme and binds the substrate succinate, while the binding sites for coenzyme A and phosphate are found in the alpha subunit. The sequence is that of Succinate--CoA ligase [ADP-forming] subunit beta from Stenotrophomonas maltophilia (strain R551-3).